Here is a 234-residue protein sequence, read N- to C-terminus: Sugar fermentation stimulation protein A (234 aa).

The H-T-H motif DNA-binding region spans 201-220 (LLSEAQQRGVEILAYKAEIS).

It belongs to the SfsA family.

In terms of biological role, binds to DNA non-specifically. Could be a regulatory factor involved in maltose metabolism. In Shigella flexneri, this protein is Sugar fermentation stimulation protein A.